A 340-amino-acid chain; its full sequence is uncharacterized protein (340 aa).

The signal sequence occupies residues 1–25; the sequence is MLGIRAMLVMLDYYWIQLITNNDTR. Residues 26 to 225 lie on the Lumenal side of the membrane; the sequence is SNNTDTIFVS…RRYMYLFSVS (200 aa). N-linked (GlcNAc...) asparagine; by host glycans are attached at residues Asn27, Asn54, Asn57, Asn68, Asn72, Asn78, Asn83, Asn107, Asn118, Asn146, Asn173, and Asn180. A helical membrane pass occupies residues 226–246; that stretch reads CAGITGTVSIILVSLSLLILI. At 247-340 the chain is on the cytoplasmic side; it reads CYYRCGRLLI…PMHMVVCMPA (94 aa).

The protein belongs to the HHV-5 UL20 protein family.

Its subcellular location is the host endoplasmic reticulum membrane. This is an uncharacterized protein from Human cytomegalovirus (strain AD169) (HHV-5).